The chain runs to 138 residues: Large ribosomal subunit protein bL19 (138 aa).

Belongs to the bacterial ribosomal protein bL19 family.

Its function is as follows. This protein is located at the 30S-50S ribosomal subunit interface and may play a role in the structure and function of the aminoacyl-tRNA binding site. The protein is Large ribosomal subunit protein bL19 of Leptospira interrogans serogroup Icterohaemorrhagiae serovar copenhageni (strain Fiocruz L1-130).